Consider the following 255-residue polypeptide: F-box/SPRY domain-containing protein 1 (255 aa).

An F-box domain is found at 3–51 (DPVAALCNYNVLEVIFSYLELDDLSHCSQVCKSWNLFLNDENSDVWRWH). One can recognise a B30.2/SPRY domain in the interval 61 to 253 (LKSDLLSSVS…VSMVYLGTPM (193 aa)).

This sequence belongs to the FBXO45/Fsn family. Component of an E3 ubiquitin ligase complex composed of hiw and Fsn.

Its subcellular location is the synapse. It functions in the pathway protein modification; protein ubiquitination. Its function is as follows. Required in the presynaptic motoneuron to down-regulate the levels of wnd and restrain synaptic terminal growth at the neuromuscular junction (NMJ). The sequence is that of F-box/SPRY domain-containing protein 1 from Drosophila ananassae (Fruit fly).